The primary structure comprises 468 residues: ATP synthase subunit beta (468 aa).

155 to 162 contributes to the ATP binding site; sequence GGAGVGKT.

Belongs to the ATPase alpha/beta chains family. As to quaternary structure, F-type ATPases have 2 components, CF(1) - the catalytic core - and CF(0) - the membrane proton channel. CF(1) has five subunits: alpha(3), beta(3), gamma(1), delta(1), epsilon(1). CF(0) has three main subunits: a(1), b(2) and c(9-12). The alpha and beta chains form an alternating ring which encloses part of the gamma chain. CF(1) is attached to CF(0) by a central stalk formed by the gamma and epsilon chains, while a peripheral stalk is formed by the delta and b chains.

It localises to the cell membrane. The catalysed reaction is ATP + H2O + 4 H(+)(in) = ADP + phosphate + 5 H(+)(out). Produces ATP from ADP in the presence of a proton gradient across the membrane. The catalytic sites are hosted primarily by the beta subunits. This is ATP synthase subunit beta from Streptococcus pneumoniae (strain Taiwan19F-14).